The primary structure comprises 209 residues: MSIENNIIKSLLEIKAIEVRKDKEKWFTWTSGIKSPIYCDNRLTISYPKVRNEIALSFKELIDTNFKDVQVIAGTATAGIPHAAWVSSLMNLPMVYVRNSSKQHGKTNQIEGLITKGSNVVIIEDLISTGKSSINVARCLREHGVNVLGIVAIFSYNLEIAKDAFMQENIKLFSLSNYDELINYMNEINQLNNNENQLLIDWRNGLNNK.

5-phospho-alpha-D-ribose 1-diphosphate is bound by residues Arg-98, Lys-102, His-104, and 124–132 (EDLISTGKS). Ser-128 is a binding site for orotate.

The protein belongs to the purine/pyrimidine phosphoribosyltransferase family. PyrE subfamily. Homodimer. It depends on Mg(2+) as a cofactor.

The catalysed reaction is orotidine 5'-phosphate + diphosphate = orotate + 5-phospho-alpha-D-ribose 1-diphosphate. The protein operates within pyrimidine metabolism; UMP biosynthesis via de novo pathway; UMP from orotate: step 1/2. Functionally, catalyzes the transfer of a ribosyl phosphate group from 5-phosphoribose 1-diphosphate to orotate, leading to the formation of orotidine monophosphate (OMP). The protein is Orotate phosphoribosyltransferase of Malacoplasma penetrans (strain HF-2) (Mycoplasma penetrans).